The following is a 204-amino-acid chain: LexA repressor (204 aa).

Residues 27-47 (VREIGEAVGLASSSTVHGHLA) constitute a DNA-binding region (H-T-H motif). Active-site for autocatalytic cleavage activity residues include serine 126 and lysine 164.

This sequence belongs to the peptidase S24 family. In terms of assembly, homodimer.

The enzyme catalyses Hydrolysis of Ala-|-Gly bond in repressor LexA.. Functionally, represses a number of genes involved in the response to DNA damage (SOS response), including recA and lexA. In the presence of single-stranded DNA, RecA interacts with LexA causing an autocatalytic cleavage which disrupts the DNA-binding part of LexA, leading to derepression of the SOS regulon and eventually DNA repair. The protein is LexA repressor of Listeria monocytogenes serotype 4b (strain CLIP80459).